We begin with the raw amino-acid sequence, 364 residues long: Leucine-rich repeat-containing protein 19 (364 aa).

The first 20 residues, 1–20 (MKVTRFMFWLFSMLLPSVKS), serve as a signal peptide directing secretion. Topologically, residues 21-264 (QASETEVPCN…SEHEPLGKSW (244 aa)) are extracellular. N-linked (GlcNAc...) asparagine glycosylation is found at asparagine 30, asparagine 35, asparagine 46, and asparagine 88. 6 LRR repeats span residues 44 to 69 (STNV…VLQM), 70 to 93 (YSLL…SFRN), 94 to 117 (LLNL…SFVG), 118 to 141 (LNEL…TFVP), 143 to 163 (NNLK…APQL), and 164 to 190 (PHLE…NWLN). Positions 174-225 (NPWNCTCGLLELHNWLNTSNVTLENENMTMCSYPDELKHDSIKSAPFTTECH) constitute an LRRCT domain. N-linked (GlcNAc...) asparagine glycosylation is found at asparagine 177, asparagine 190, asparagine 193, asparagine 200, asparagine 241, asparagine 245, and asparagine 250. The helical transmembrane segment at 265 to 285 (AFLVGVVATVLLTSLLIFIAI) threads the bilayer. The Cytoplasmic portion of the chain corresponds to 286-364 (KCPVWYNILL…IDINEVHEEK (79 aa)).

As to quaternary structure, interacts with TRAF2 and TRAF6. Strongly expressed in kidney, also expressed in spleen, intestine and colon. Highly expressed in epithelial cells. In kidney, mainly expressed in renal collecting duct epithelial cells.

It is found in the membrane. Activated by TLR ligands such as LPS, bacterial DNA and peptidoglycan. Functionally, pathogen-recognition receptor which mediates the activation of TRAF2- and TRAF6 NF-kappa-B signaling pathways and induces the expression of pro-inflammatory cytokines. In kidney, prevents infection by uropathogenic bacteria by inducing the production of cytokines, chemokines and antimicrobial substances. In gut, involved in host-microbiota interactions, plays a critical role in promoting the recruitment of immune cells and intestinal inflammation. The polypeptide is Leucine-rich repeat-containing protein 19 (Mus musculus (Mouse)).